Consider the following 227-residue polypeptide: Cytochrome c oxidase subunit 2 (227 aa).

At 1–14 (MAYPFQLGLQDATS) the chain is on the mitochondrial intermembrane side. Residues 15-45 (PIMEELTNFHDHTLMIVFLISSLVLYIISLM) form a helical membrane-spanning segment. The Mitochondrial matrix segment spans residues 46–59 (LTTKLTHTSTMDAQ). The helical transmembrane segment at 60–87 (EVETIWTILPAAILVLIALPSLRILYMM) threads the bilayer. At 88–227 (DEINNPVLTV…HFENWSASMV (140 aa)) the chain is on the mitochondrial intermembrane side. Positions 161, 196, 198, 200, 204, and 207 each coordinate Cu cation. Position 198 (Glu198) interacts with Mg(2+).

This sequence belongs to the cytochrome c oxidase subunit 2 family. As to quaternary structure, component of the cytochrome c oxidase (complex IV, CIV), a multisubunit enzyme composed of 14 subunits. The complex is composed of a catalytic core of 3 subunits MT-CO1, MT-CO2 and MT-CO3, encoded in the mitochondrial DNA, and 11 supernumerary subunits COX4I, COX5A, COX5B, COX6A, COX6B, COX6C, COX7A, COX7B, COX7C, COX8 and NDUFA4, which are encoded in the nuclear genome. The complex exists as a monomer or a dimer and forms supercomplexes (SCs) in the inner mitochondrial membrane with NADH-ubiquinone oxidoreductase (complex I, CI) and ubiquinol-cytochrome c oxidoreductase (cytochrome b-c1 complex, complex III, CIII), resulting in different assemblies (supercomplex SCI(1)III(2)IV(1) and megacomplex MCI(2)III(2)IV(2)). Found in a complex with TMEM177, COA6, COX18, COX20, SCO1 and SCO2. Interacts with TMEM177 in a COX20-dependent manner. Interacts with COX20. Interacts with COX16. Requires Cu cation as cofactor.

The protein localises to the mitochondrion inner membrane. The catalysed reaction is 4 Fe(II)-[cytochrome c] + O2 + 8 H(+)(in) = 4 Fe(III)-[cytochrome c] + 2 H2O + 4 H(+)(out). In terms of biological role, component of the cytochrome c oxidase, the last enzyme in the mitochondrial electron transport chain which drives oxidative phosphorylation. The respiratory chain contains 3 multisubunit complexes succinate dehydrogenase (complex II, CII), ubiquinol-cytochrome c oxidoreductase (cytochrome b-c1 complex, complex III, CIII) and cytochrome c oxidase (complex IV, CIV), that cooperate to transfer electrons derived from NADH and succinate to molecular oxygen, creating an electrochemical gradient over the inner membrane that drives transmembrane transport and the ATP synthase. Cytochrome c oxidase is the component of the respiratory chain that catalyzes the reduction of oxygen to water. Electrons originating from reduced cytochrome c in the intermembrane space (IMS) are transferred via the dinuclear copper A center (CU(A)) of subunit 2 and heme A of subunit 1 to the active site in subunit 1, a binuclear center (BNC) formed by heme A3 and copper B (CU(B)). The BNC reduces molecular oxygen to 2 water molecules using 4 electrons from cytochrome c in the IMS and 4 protons from the mitochondrial matrix. The polypeptide is Cytochrome c oxidase subunit 2 (MT-CO2) (Uromys caudimaculatus (Giant white-tailed rat)).